The following is a 341-amino-acid chain: MATIKDVAKRAGVSTTTVSHVINKTRFVAEETKAAVGAAIKELHYSPSAVARSLKVNHTKSIGLLATSSEAPYFAEVIEAVENSCYSKGYTLILCNSHNNLDKQRAYLAMLAQKRVDGLLVMCSEYPDQLLGMLEDYRNIPMVVMDWGAARGDFTDSIIDNAFAGGYLAGRYLIERGHRDIGAIPGQLSRNTGGGRHQGFLKAMEEANIEVRDEWIVQGDFEPESGYKAMHQILSQKHRPTAVFCGGDIMAMGAICAADELGLRVPQDISVIGYDNVRNARYFTPALTTIHQPKERLGEMAFTMLLDRIISKREESQVIEVHPKLIERRSVADGPFIDYRR.

The HTH lacI-type domain occupies 2–56; it reads ATIKDVAKRAGVSTTTVSHVINKTRFVAEETKAAVGAAIKELHYSPSAVARSLKV. The H-T-H motif DNA-binding region spans 4-23; sequence IKDVAKRAGVSTTTVSHVIN. A DNA-binding region spans residues 48-56; it reads SAVARSLKV. Residues tyrosine 73, arginine 190, threonine 192, phenylalanine 221, and aspartate 275 each coordinate hypoxanthine.

In terms of assembly, homodimer.

Its pathway is purine metabolism; purine nucleotide biosynthesis [regulation]. Functionally, is the main repressor of the genes involved in the de novo synthesis of purine nucleotides, regulating purB, purC, purEK, purF, purHD, purL, purMN and guaBA expression. PurR is allosterically activated to bind its cognate DNA by binding the purine corepressors, hypoxanthine or guanine, thereby effecting transcription repression. This Serratia proteamaculans (strain 568) protein is HTH-type transcriptional repressor PurR.